A 478-amino-acid polypeptide reads, in one-letter code: Lysosome membrane protein 2 (478 aa).

Over 2–4 (ARC) the chain is Cytoplasmic. A helical membrane pass occupies residues 5-27 (CFYTAGTLSLLLLVTSVTLLVAR). Over 28–433 (VFQKAVDQTI…QLKSVINTTL (406 aa)) the chain is Lumenal. N-linked (GlcNAc...) asparagine glycans are attached at residues Asn-45, Asn-68, Asn-105, and Asn-122. Residues 155–191 (IIEAMLKAYQQTLFVTHTVHELLWGYKDEVLSLVHIF) form an important for interaction with GBA1 region. 4 N-linked (GlcNAc...) asparagine glycosylation sites follow: Asn-206, Asn-224, Asn-249, and Asn-304. Intrachain disulfides connect Cys-274/Cys-329 and Cys-312/Cys-318. Residues Asn-325, Asn-412, and Asn-430 are each glycosylated (N-linked (GlcNAc...) asparagine). Residues 434–459 (IVTNIPYIIMALGVFFGLIFTWLACR) traverse the membrane as a helical segment. Residues 460-478 (GQGSTDEGTADERAPLIRT) are Cytoplasmic-facing.

This sequence belongs to the CD36 family. In terms of assembly, interacts with GBA1. In terms of processing, acylated by palmitic acid group(s).

The protein resides in the lysosome membrane. Acts as a lysosomal receptor for glucosylceramidase (GBA1) targeting. The sequence is that of Lysosome membrane protein 2 (Scarb2) from Rattus norvegicus (Rat).